A 671-amino-acid chain; its full sequence is MYQSTLKTILLASALLILPASMSAQKRKAAPKKAATEQVGKPDPNFYIFLCFGQSNMEGNARPEAQDLTSPGPRFLLMPAVDFPEKGRKMGEWCEASAPLCRPNTGLTPADWFGRTLVASLPENIKIGVIHVAIGGIDIKGFLPDSIQNYLKVAPNWMKGMLAAYDNNPYERLVTLAKKAQKDGVIKGILMHQGETNTGDPKWAGMVKQVYDNLCGDLNLKPEEVNLYAGNIVQADGKGVCIGCKKQIDELPLTLHTSQVISSDGCTNGPDRLHFDAAGYRELGCRYGEAVARHLGYEPKRPYIEMPKQIEVPADAFIAETTVPGNEFPKVDKEGRAYFRIAAPEARKVVLDICNKKYDMQRDGKGNFMAVTDPLPVGFHYYFLNINGVNFIDPSTETFFGCNRESGGIEIPEGSEGDYYRPQQGVPAGQVRSIYYYSNEQQTWRHAMVYTPAEYELAKNAKKRYPVLYLQHGMGEDETGWSKQGHMQHIMDNAIAKGEAVPMIVVMESGDIKAPFGGGNNQAGRSAYGASFYPVLLNDLIPYIDSNYRTKSDRENRAMAGLSWGGHQTFDVVLTNLDKFAWLGTFSGAIFGLDVKTAYDGVFANADEFNKKIHYMYMNWGEEDFIKSGDIVKQLRELGIKVDSNESKGTAHEWLTWRRGLNEFIPHLFKK.

The N-terminal stretch at 1–24 (MYQSTLKTILLASALLILPASMSA) is a signal peptide. Residues 1-296 (MYQSTLKTIL…YGEAVARHLG (296 aa)) are carbohydrate acetyl esterase. Catalysis depends on for acetyl esterase activity residues serine 55, aspartate 271, and histidine 274. The tract at residues 297–671 (YEPKRPYIEM…NEFIPHLFKK (375 aa)) is feruloyl esterase.

The protein in the N-terminal section; belongs to the carbohydrate esterase 6 family.

The catalysed reaction is feruloyl-polysaccharide + H2O = ferulate + polysaccharide.. It participates in glycan degradation; xylan degradation. Its function is as follows. Involved in degradation of plant cell wall polysaccharides. Bifunctional esterase that possesses both acetyl esterase and ferulic acid esterase activities. Has deacetylase activity towards acetylated xylo-oligosaccharides smaller than xylo-heptaose, as well as from glucose-pentaacetate. Is also able to release ferulic acid from methylferulate, and from the more natural substrates wheat bran, corn fiber, and XOS(FA,Ac), a corn fiber-derived substrate enriched in O-acetyl and ferulic acid esters. The protein is Carbohydrate acetyl esterase/feruloyl esterase of Xylanibacter ruminicola (strain ATCC 19189 / DSM 19721 / CIP 105475 / JCM 8958 / 23) (Prevotella ruminicola).